Reading from the N-terminus, the 1183-residue chain is DNA-directed RNA polymerase subunit beta (1183 aa).

Residues 1153 to 1162 (DMQDNEEEDV) are compositionally biased toward acidic residues. The disordered stretch occupies residues 1153-1183 (DMQDNEEEDVVERKVDLQQKDAPQSQKEVTD). The segment covering 1173-1183 (DAPQSQKEVTD) has biased composition (polar residues).

The protein belongs to the RNA polymerase beta chain family. As to quaternary structure, the RNAP catalytic core consists of 2 alpha, 1 beta, 1 beta' and 1 omega subunit. When a sigma factor is associated with the core the holoenzyme is formed, which can initiate transcription.

It catalyses the reaction RNA(n) + a ribonucleoside 5'-triphosphate = RNA(n+1) + diphosphate. Functionally, DNA-dependent RNA polymerase catalyzes the transcription of DNA into RNA using the four ribonucleoside triphosphates as substrates. The protein is DNA-directed RNA polymerase subunit beta of Staphylococcus saprophyticus subsp. saprophyticus (strain ATCC 15305 / DSM 20229 / NCIMB 8711 / NCTC 7292 / S-41).